Reading from the N-terminus, the 524-residue chain is Cytochrome P450 monooxygenase lnaC (524 aa).

The chain crosses the membrane as a helical span at residues 16–36 (ALAVSCIAVSLFLLSPWIAYA). Asparagine 150 carries N-linked (GlcNAc...) asparagine glycosylation. Cysteine 471 is a binding site for heme.

It belongs to the cytochrome P450 family. Requires heme as cofactor.

It localises to the membrane. The protein operates within secondary metabolite biosynthesis. Its function is as follows. Cytochrome P450 monooxygenase; part of the lna gene cluster that mediates the biosynthesis of diastereomeric piperazines. Lna and lnb clusters encode sets of enzymes that produce overlapping sets of previously undescribed metabolites such as piperazinomycin-like metabolites or morpholine. The lna and lnb biosynthetic pathways appear to be part of a signaling network that controls the formation of sclerotia, a resilient overwintering structure. One primary function of the non-canonical nonribosomal peptide synthetases lnaA and lnbA consists in the reduction of L-tyrosine. The presence in the clusters of tailoring enzymes such as the oxidoreductases lnaB, lnbB, lnaE or lnbE, as well as of the cytochrome P450 monooxygenases lnaC, lnaD, or lnbC, might explain formation of various diastereomeric piperazines. This is Cytochrome P450 monooxygenase lnaC from Aspergillus flavus (strain ATCC 200026 / FGSC A1120 / IAM 13836 / NRRL 3357 / JCM 12722 / SRRC 167).